Here is a 393-residue protein sequence, read N- to C-terminus: Elongation factor Tu (393 aa).

The tr-type G domain occupies 10-203 (KPHVNIGTIG…AVDEFIPEPL (194 aa)). Positions 19 to 26 (GHVDHGKT) are G1. A GTP-binding site is contributed by 19 to 26 (GHVDHGKT). T26 is a Mg(2+) binding site. Positions 60–64 (GITIS) are G2. A G3 region spans residues 81-84 (DCPG). GTP is bound by residues 81–85 (DCPGH) and 136–139 (NKVD). Residues 136-139 (NKVD) form a G4 region. Residues 173 to 175 (SAL) are G5.

The protein belongs to the TRAFAC class translation factor GTPase superfamily. Classic translation factor GTPase family. EF-Tu/EF-1A subfamily. As to quaternary structure, monomer.

The protein localises to the cytoplasm. It catalyses the reaction GTP + H2O = GDP + phosphate + H(+). Its function is as follows. GTP hydrolase that promotes the GTP-dependent binding of aminoacyl-tRNA to the A-site of ribosomes during protein biosynthesis. This chain is Elongation factor Tu, found in Chlorobium phaeobacteroides (strain DSM 266 / SMG 266 / 2430).